Here is a 182-residue protein sequence, read N- to C-terminus: MSSSSSIWDIIIDYLSLSSIWNYLQATLLGETSVPQQTNLGPLDNLAPAVQVILGISFLILLGVGMYALWKRSVQSIQKILLFAITLYKLYKKGSDFFQALLVNPEGSDLTLQDNNIFLSLGLQEKILKKLQTVENKVKDLEGMIISQKPTTKREYSSDHYCSCSDCQSPLPTSGFTSTSEM.

Helical transmembrane passes span 10–30 and 50–70; these read IIIDYLSLSSIWNYLQATLLG and VQVILGISFLILLGVGMYALW. The stretch at 122–149 forms a coiled coil; the sequence is GLQEKILKKLQTVENKVKDLEGMIISQK.

It localises to the membrane. This is Transmembrane and coiled-coil domain-containing protein 2 (TMCO2) from Bos taurus (Bovine).